A 545-amino-acid chain; its full sequence is MSRHSQDERLGLPQPPALLPLLLLLLAVAVPLSQAGVYYATAYWMPTEKTIQVKNVLDRKGDAYGFYNNSVKTTGWGILEIKAGYGSQSLSNEIIMFAAGFLEGYLTAPHMDDHFTNLYPQLIKKRSMLNKVQDFLTKQDQWTRENIKYYKSDPFWRHADYVMAQMDGLFAGATKRAVLEGKKPMTLFQIQFLNAIGDLLDLIPSLSPTKNSSLKFFKRWDMGHCSALIKVLPGFENIFFAHSSWYTYAAMLRIYKHWDFNIVDKDTSSSRLSFSSYPGFLESLDDFYLLSSGLVLLQTTNSVYNKTLLQHVVPQSLLAWQRVRVASMMANNGKQWAEVFSKYNSGTYNNQYMVLDLKKVNLNHSLDEGTLYIVEQIPTYVEYSEQTAVLRRGYWPSYNIPFHEKVYNWSGYPILVKKLGLDYSYDLASRAKIFRRDQGKVTDMESMKYIMRYNNYKQDPYSKGDPCNTVCCREDLNSHSPSPGGCYDTKVADIYLASKYKAYAISGPTVQGGLPVFHWSRFNKTLHEGMPEAYNFDFITMKPIL.

The N-terminal stretch at 1–35 (MSRHSQDERLGLPQPPALLPLLLLLLAVAVPLSQA) is a signal peptide. A glycan (N-linked (GlcNAc...) (high mannose) asparagine; alternate) is linked at N68. N-linked (GlcNAc...) (hybrid) asparagine; alternate glycosylation occurs at N68. Residues 206–224 (LSPTKNSSLKFFKRWDMGH) constitute a propeptide, removed in mature form. N-linked (GlcNAc...) (high mannose) asparagine; alternate glycans are attached at residues N305, N363, and N408. 3 N-linked (GlcNAc...) (hybrid) asparagine; alternate glycosylation sites follow: N305, N363, and N408. Disulfide bonds link C467–C472 and C471–C486. N523 is a glycosylation site (N-linked (GlcNAc...) (high mannose) asparagine; alternate). The N-linked (GlcNAc...) (hybrid) asparagine; alternate glycan is linked to N523.

It belongs to the phospholipase B-like family. In terms of assembly, may form a homodimer, each monomer is composed of a chain A and a chain B. The maturation cleavages that produces chains A and B are required to open the putative substrate binding pocket. Both chains A and B remain associated in the mature protein.

It is found in the lysosome. Its function is as follows. Exhibits a weak phospholipase activity, acting on various phospholipids, including phosphatidylcholine, phosphatidylinositol, phosphatidylethanolamine and lysophospholipids. However, in view of the small size of the putative binding pocket, it has been proposed that it may act rather as an amidase or a peptidase. The protein is Phospholipase B-like 1 (PLBD1) of Bos taurus (Bovine).